The following is a 633-amino-acid chain: Pesticidal crystal protein Cry2Ab (633 aa).

It belongs to the delta endotoxin family.

In terms of biological role, promotes colloidosmotic lysis by binding to the midgut epithelial cells of lepidopteran (Manduca sexta) larvae. This Bacillus thuringiensis subsp. kurstaki protein is Pesticidal crystal protein Cry2Ab (cry2Ab).